Reading from the N-terminus, the 1857-residue chain is MVGPSPAGTVPSHAQSSLPSLPAHLQSDTHLTAHLASRFHVGLPTARLSSQALISLNTYTSSSKGPDGGKEGSAMGEAEDLARRAFTRLGARGENQAIVFLGESGAGKTTLRAHVLSSFLSFSSTPLSSKLSYASFIFDTLTTTKSLTTLTASKAGLFLELQYDGSSSVNPTLIGGKIIDHRLERSRIASVPTGERSFHVLYYLLAGTSAAEKSHLGFDNSIHVSTNAGKLSSASIGHKRWRYLGHPTQLKVGINDAEGFQHFKTALRKLEFPRSEIAEICQILAVILHIGQLDFASGQATLTSAEESGGYSHEGGETVTVVKNKDVLSSVAAFLGLGVDELENSFSYRTKTIHRERVTVMLDPKGARQNADELARTIYSLLVAYILENVNQRICAAEDSVANTVSIVDFPGFSQACSTGSTLDQLLSNAATESLYNFCLQSFFDRKADMLEREEVVVPATSYFDNTDAVRGLLKHGNGLLSILDDQTRRGRTEAQFAESLKKRFENKNPAIVVGSSGSTHGTGYVSQQARSAFTVKHFAGEVDYSISGLLEENGEVISGDLMNLMKSTRSDFVRELFGQEALQTVTHPKEKTAIMQAQVSSKPLRMPSMARRKASPASRLTFDAPTAEEPEDNESYGGSTAKSSGRRKSAMSMTGMQGAAGQFLSSLEIVNKCLSSPSLNPYFIFCLKPNDRRIANQFDSKCVRAQVQTFGIAEISQRLRNADFSVFLPFEEFLGLAEVGNVVVGSDKEKSEVVLDEKRWPGNEARVGSTGVFLSERCWADLAKVGERVVPVYHADGSDEGGDGLLHPRTAGYGDSKVRLLNPADQSLGNFIYGDESKQGYFGSRDIDGRSDTGGSGLNSGDMFHNLETREQMLEKGNEKKMEEVDEVPVSGSRKRWMAIVWLLTFYIPDFAIRLFGRMKRKDVRTAWREKFAINLIIWFSCAVAIFFIVAFPGLVCPTQHVYSAAELESHNGKNGHDSYIAIRGVVFDLDKFMPRHYPDIVPQSSLKKYAGMDATGLFPVQVSALCQGKDGSIDPTVLLDYTPTNISGSATTISTGDLNAKYHDFRYYTNDSRPDWFAEQMKELRATYLKGYIGYTPQYISTLAKKSQNIGSIDGKVYDLTTYISGGRRVAAPTGKEVPANVDREFMDPLVVSLFQDLPGQDLSKHWEQLQIDAGMRDRMQMCLDNLFFVGKVDTRNSAQCQFARYFILAISILICAVVIFKFAAALQFGKKNVPENLDKFIICQVPAYTEDEESLRRAMDSMARMQYDDKRKLLVVICDGMIIGQGNDRPTPRIVLDILGVPESVDPEPLSFESLGEGMKQHNMGKIYSGLYEVQGHIVPFLVVVKVGKPSEVSRPGNRGKRDSQMVLMRFLNRVHYNLPMSPMELEMYHQIRNIIGVNPTFYEFILQVDADTVVAPDSGTRFVASCLADTRIIGICGETGLTNAKHSAVTMIQVYEYFISHNLIKAFESLFGSVTCLPGCFTMYRIRSAETAKPLFVSKEVVEAYSEIRVDTLHMKNLLHLGEDRYLTTLLLKHHPSFKTKFLFAAKAWTIAPESFSVFLSQRRRWINSTVHNLIELIPLQQLCGFCCFSMRFIVFVDLLSTCIQPVSLAYIIYLIVWLARDSSTIPWTSFVLIAAIYGLQALIFIFRRKWEMIGWMIVYLLAMPIFSVALPFYSFWHMDDFSWGNTRVITGEKGRKVVISDEGKFDPASIPKKRWEEYQAELWEAQTSRDDRSEVSGFSYGTKSYHPAQSEYGFPGARPMSQFDLPRYGSRMSLAPSEMMSRHMDMEMEDLSHLPSDDAILAEIREILRTADLMTVTKKSIKQELERRFGVNLDAKRPYINSATEAVLSGAL.

Positions 1-22 (MVGPSPAGTVPSHAQSSLPSLP) are disordered. Positions 1-788 (MVGPSPAGTV…CWADLAKVGE (788 aa)) constitute a Myosin motor domain. 102-109 (GESGAGKT) provides a ligand contact to ATP. The segment at 601-653 (SSKPLRMPSMARRKASPASRLTFDAPTAEEPEDNESYGGSTAKSSGRRKSAMS) is disordered. Asparagine 634 carries an N-linked (GlcNAc...) asparagine glycan. An actin-binding region spans residues 668–692 (LEIVNKCLSSPSLNPYFIFCLKPND). The next 2 helical transmembrane spans lie at 898-918 (WMAI…RLFG) and 937-957 (LIIW…PGLV). Residues 961–1020 (QHVYSAAELESHNGKNGHDSYIAIRGVVFDLDKFMPRHYPDIVPQSSLKKYAGMDATGLF) form the Cytochrome b5 heme-binding domain. N-linked (GlcNAc...) asparagine glycans are attached at residues asparagine 1047 and asparagine 1072. Residues 1209-1229 (FILAISILICAVVIFKFAAAL) form a helical membrane-spanning segment. An N-linked (GlcNAc...) asparagine glycan is attached at asparagine 1572. The next 3 helical transmembrane spans lie at 1603 to 1623 (LLST…IVWL), 1630 to 1650 (IPWT…LIFI), and 1657 to 1677 (MIGW…ALPF). Residues 1799–1854 (LPSDDAILAEIREILRTADLMTVTKKSIKQELERRFGVNLDAKRPYINSATEAVLS) enclose the DEK-C domain.

The protein in the N-terminal section; belongs to the TRAFAC class myosin-kinesin ATPase superfamily. Myosin family. This sequence in the C-terminal section; belongs to the chitin synthase family. Class V subfamily.

The protein resides in the cell membrane. It localises to the cell septum. It is found in the cell tip. The catalysed reaction is [(1-&gt;4)-N-acetyl-beta-D-glucosaminyl](n) + UDP-N-acetyl-alpha-D-glucosamine = [(1-&gt;4)-N-acetyl-beta-D-glucosaminyl](n+1) + UDP + H(+). Functionally, polymerizes chitin, a structural polymer of the cell wall and septum, by transferring the sugar moiety of UDP-GlcNAc to the non-reducing end of the growing chitin polymer. Specifically involved in hyphal elongation and new cell wall formation. In Aspergillus oryzae (strain ATCC 42149 / RIB 40) (Yellow koji mold), this protein is Chitin synthase Y.